The primary structure comprises 653 residues: Fructose-1,6-bisphosphatase class 3 (653 aa).

It belongs to the FBPase class 3 family. The cofactor is Mn(2+).

It carries out the reaction beta-D-fructose 1,6-bisphosphate + H2O = beta-D-fructose 6-phosphate + phosphate. It functions in the pathway carbohydrate biosynthesis; gluconeogenesis. This is Fructose-1,6-bisphosphatase class 3 from Listeria innocua serovar 6a (strain ATCC BAA-680 / CLIP 11262).